We begin with the raw amino-acid sequence, 127 residues long: Major sperm protein 49 (127 aa).

At Ala-2 the chain carries N-acetylalanine. In terms of domain architecture, MSP spans 9–126 (DIQTQPGTKI…RRKNLPIEYN (118 aa)).

Sperm.

It localises to the cell projection. Its subcellular location is the pseudopodium. It is found in the cytoplasm. The protein resides in the cytoskeleton. Functionally, central component in molecular interactions underlying sperm crawling. Forms an extensive filament system that extends from sperm villipoda, along the leading edge of the pseudopod. The chain is Major sperm protein 49 (msp-49) from Caenorhabditis elegans.